The primary structure comprises 209 residues: Uracil phosphoribosyltransferase (209 aa).

Residues Arg79, Arg104, and 131-139 (DPMLATGNS) contribute to the 5-phospho-alpha-D-ribose 1-diphosphate site. Uracil-binding positions include Ile194 and 199–201 (GDA). Asp200 is a 5-phospho-alpha-D-ribose 1-diphosphate binding site.

The protein belongs to the UPRTase family. Requires Mg(2+) as cofactor.

The catalysed reaction is UMP + diphosphate = 5-phospho-alpha-D-ribose 1-diphosphate + uracil. It participates in pyrimidine metabolism; UMP biosynthesis via salvage pathway; UMP from uracil: step 1/1. With respect to regulation, allosterically activated by GTP. Functionally, catalyzes the conversion of uracil and 5-phospho-alpha-D-ribose 1-diphosphate (PRPP) to UMP and diphosphate. In Acidovorax ebreus (strain TPSY) (Diaphorobacter sp. (strain TPSY)), this protein is Uracil phosphoribosyltransferase.